The primary structure comprises 149 residues: Transcriptional regulator MraZ (149 aa).

SpoVT-AbrB domains follow at residues 7–54 (KYIN…GIAH) and 83–126 (AVQL…QPQN).

It belongs to the MraZ family. In terms of assembly, forms oligomers.

It localises to the cytoplasm. The protein localises to the nucleoid. This is Transcriptional regulator MraZ from Rickettsia typhi (strain ATCC VR-144 / Wilmington).